Reading from the N-terminus, the 530-residue chain is DNA damage-binding protein cmr1 (530 aa).

Disordered stretches follow at residues 34-115 (VGLF…RKSD) and 224-250 (TKPV…LTTL). Residues 52 to 62 (AKKKKPAPKKV) show a composition bias toward basic residues. The span at 89–108 (EVAKRKADEHDAALQEAERA) shows a compositional bias: basic and acidic residues. The stretch at 188-229 (LTPERIYAMTFHPSESKPLIFAGDKMGHLGVLDASQTKPVSA) is one WD 1 repeat. A compositionally biased stretch (acidic residues) spans 233 to 244 (DEDEEDDDDDPD). WD repeat units lie at residues 252-292 (PHTR…SVER), 302-339 (VPIS…QDSA), 344-384 (LSDK…HKSP), 389-430 (EHES…ASWK), 453-496 (GRWV…LAQL), and 499-530 (DGIT…CLWM).

It belongs to the WD repeat DDB2/WDR76 family.

In terms of biological role, DNA-binding protein that binds to both single- and double-stranded DNA. Binds preferentially to UV-damaged DNA. May be involved in DNA-metabolic processes. The sequence is that of DNA damage-binding protein cmr1 from Aspergillus terreus (strain NIH 2624 / FGSC A1156).